Here is a 295-residue protein sequence, read N- to C-terminus: Nicotinate-nucleotide pyrophosphorylase [carboxylating] (295 aa).

Substrate contacts are provided by residues Arg-107, Thr-142–Lys-144, Arg-166, Lys-176, Glu-206, Asp-227, and Ser-256–Gly-258.

Belongs to the NadC/ModD family. In terms of assembly, hexamer formed by 3 homodimers.

The protein localises to the cytoplasm. It is found in the nucleus. It carries out the reaction nicotinate beta-D-ribonucleotide + CO2 + diphosphate = quinolinate + 5-phospho-alpha-D-ribose 1-diphosphate + 2 H(+). It participates in cofactor biosynthesis; NAD(+) biosynthesis; nicotinate D-ribonucleotide from quinolinate: step 1/1. Involved in the catabolism of quinolinic acid (QA). The sequence is that of Nicotinate-nucleotide pyrophosphorylase [carboxylating] (BNA6) from Saccharomyces cerevisiae (strain ATCC 204508 / S288c) (Baker's yeast).